A 192-amino-acid chain; its full sequence is Erythropoietin (192 aa).

A signal peptide spans 1–25; that stretch reads MGARDCTPLLMLSFLLFPLGFPVLG. Intrachain disulfides connect Cys32–Cys187 and Cys54–Cys58. Asn49 is a glycosylation site (N-linked (GlcNAc...) asparagine). N-linked (GlcNAc...) asparagine glycans are attached at residues Asn63 and Asn108.

It belongs to the EPO/TPO family. Produced by kidney or liver of adult mammals and by liver of fetal or neonatal mammals.

It localises to the secreted. Its function is as follows. Hormone involved in the regulation of erythrocyte proliferation and differentiation and the maintenance of a physiological level of circulating erythrocyte mass. Binds to EPOR leading to EPOR dimerization and JAK2 activation thereby activating specific downstream effectors, including STAT1 and STAT3. The chain is Erythropoietin (EPO) from Bos taurus (Bovine).